A 151-amino-acid chain; its full sequence is Glycosylation-dependent cell adhesion molecule 1 (151 aa).

An N-terminal signal peptide occupies residues 1–19 (MKFFTVLLFVSLAATSLAL). Residues 29-123 (MKTQPTDAIP…ENLTKSSQTV (95 aa)) form a disordered region. The segment covering 42–52 (STPTSYTSEES) has biased composition (low complexity). Positions 53 to 71 (TSSKDLSKEPSIFREELIS) are enriched in basic and acidic residues. Residues S54, S59, S63, and S71 each carry the phosphoserine modification. Residues 103–114 (RPTTSAATTSEE) show a composition bias toward low complexity. Residue N115 is glycosylated (N-linked (GlcNAc...) asparagine).

The protein belongs to the PP3/GlyCAM-1 family. Post-translationally, extensively O-glycosylated. In terms of tissue distribution, lymph nodes. Associated with the lumenal surface of the high endothelial venules of peripheral lymph nodes.

It is found in the cell membrane. Adhesion molecule that accomplishes cell binding by presenting carbohydrate(s) to the lectin domain of L-selectin. This Mus musculus (Mouse) protein is Glycosylation-dependent cell adhesion molecule 1 (Glycam1).